A 505-amino-acid chain; its full sequence is Cyclic AMP-dependent transcription factor ATF-2 (505 aa).

The short motif at 1-7 is the Nuclear export signal 1 (N-NES) element; the sequence is MKFKLHV. The C2H2-type zinc-finger motif lies at 25 to 49; the sequence is FLCTAPGCGQRFTNEDHLAVHKHKH. Threonine 52 is modified (phosphothreonine; by PKC/PRKCH). At serine 62 the chain carries Phosphoserine; by VRK1. Threonine 69 is modified (phosphothreonine; by MAPK11 and MAPK14). The residue at position 71 (threonine 71) is a Phosphothreonine; by MAPK1, MAPK3, MAPK11, MAPK12, MAPK14 and PLK3. The residue at position 73 (threonine 73) is a Phosphothreonine; by VRK1. Residues serine 90 and serine 112 each carry the phosphoserine modification. Threonine 116 is subject to Phosphothreonine. At serine 121 the chain carries Phosphoserine; by PKC/PRKCA and PKC/PRKCB. 2 disordered regions span residues 125–155 and 259–373; these read EPSV…PLAQ and PGIP…RQKR. A Phosphoserine modification is found at serine 136. Positions 282 to 293 are enriched in polar residues; sequence LTQQHPPVTNGD. Residues 296-299 form an essential for its histone acetyltransferase activity region; the sequence is KGHG. Positions 318–334 are enriched in low complexity; it reads PATSTTETPASPAHTTP. Serine 328 carries the post-translational modification Phosphoserine. Residue serine 340 is modified to Phosphoserine; by PKC/PRKCA and PKC/PRKCB. Positions 346–363 are enriched in basic and acidic residues; sequence AANEDPDEKRRKFLERNR. The 64-residue stretch at 352–415 folds into the bZIP domain; sequence DEKRRKFLER…AQLKQLLLAH (64 aa). The segment at 354–374 is basic motif; sequence KRRKFLERNRAAASRCRQKRK. At lysine 357 the chain carries N6-acetyllysine. Serine 367 bears the Phosphoserine; by PKC/PRKCA and PKC/PRKCB mark. An N6-acetyllysine modification is found at lysine 374. Residues 380–408 are leucine-zipper; the sequence is LEKKAEDLSSLNGQLQSEVTLLRNEVAQL. The short motif at 405–414 is the Nuclear export signal 2 (C-NES) element; the sequence is VAQLKQLLLA. The interval 425-472 is disordered; sequence KKSGYHTADKDDSSEDISVPSSPHTEAIQHSSVSTSNGVSSTSKAEAV. Residues serine 442 and serine 446 each carry the phosphoserine modification. Positions 443–454 are enriched in polar residues; that stretch reads VPSSPHTEAIQH. A compositionally biased stretch (low complexity) spans 455 to 467; the sequence is SSVSTSNGVSSTS. Phosphoserine; by ATM is present on residues serine 490 and serine 498.

This sequence belongs to the bZIP family. ATF subfamily. In terms of assembly, binds DNA as a dimer and can form a homodimer in the absence of DNA. Can form a heterodimer with JUN. Heterodimerization is essential for its transcriptional activity. Interacts with SMAD3 and SMAD4. Binds through its N-terminal region to UTF1 which acts as a coactivator of ATF2 transcriptional activity. Interacts with the HK1/VDAC1 complex. Interacts with NBN, MRE11, XPO1, KAT5 and CUL3. In terms of processing, phosphorylation of Thr-69 by MAPK14 and MAPK11, and at Thr-71 by MAPK1/ERK2, MAPK3/ERK1, MAPK11, MAPK12 and MAPK14 in response to external stimulus like insulin causes increased transcriptional activity. Phosphorylated by PLK3 following hyperosmotic stress. Also phosphorylated and activated by JNK and CaMK4. ATM-mediated phosphorylation at Ser-490 and Ser-498 stimulates its function in DNA damage response. Phosphorylation at Ser-62, Thr-73 and Ser-121 activates its transcriptional activity. Phosphorylation at Thr-69 or Thr-71 enhances acetylation of histones H2B and H4. As to expression, ubiquitously expressed, with more abundant expression in the brain.

The protein resides in the nucleus. It is found in the cytoplasm. The protein localises to the mitochondrion outer membrane. Its function is as follows. Transcriptional activator which regulates the transcription of various genes, including those involved in anti-apoptosis, cell growth, and DNA damage response. Dependent on its binding partner, binds to CRE (cAMP response element) consensus sequences (5'-TGACGTCA-3') or to AP-1 (activator protein 1) consensus sequences (5'-TGACTCA-3'). In the nucleus, contributes to global transcription and the DNA damage response, in addition to specific transcriptional activities that are related to cell development, proliferation and death. In the cytoplasm, interacts with and perturbs HK1- and VDAC1-containing complexes at the mitochondrial outer membrane, thereby impairing mitochondrial membrane potential, inducing mitochondrial leakage and promoting cell death. The phosphorylated form (mediated by ATM) plays a role in the DNA damage response and is involved in the ionizing radiation (IR)-induced S phase checkpoint control and in the recruitment of the MRN complex into the IR-induced foci (IRIF). Exhibits histone acetyltransferase (HAT) activity which specifically acetylates histones H2B and H4 in vitro. In concert with CUL3 and RBX1, promotes the degradation of KAT5 thereby attenuating its ability to acetylate and activate ATM. Can elicit oncogenic or tumor suppressor activities depending on the tissue or cell type. The polypeptide is Cyclic AMP-dependent transcription factor ATF-2 (ATF2) (Homo sapiens (Human)).